Here is a 343-residue protein sequence, read N- to C-terminus: Zinc finger CCCH domain-containing protein 1 (343 aa).

The interval 1–102 is disordered; the sequence is MSDSGEPKPS…PERSVFHYDS (102 aa). Residues 7–25 show a composition bias toward low complexity; the sequence is PKPSQQEEPLPQPAAQETQ. Positions 35–44 are enriched in basic residues; it reads KPTKSKNIRK. Residues 79–91 are compositionally biased toward low complexity; the sequence is SSGPSKSSTTTSG. The C3H1-type zinc finger occupies 200 to 228; that stretch reads DYQPDICKDYKETGYCGYGDSCKFLHDRG. A disordered region spans residues 249–268; sequence RNKAMGVEDEDDEADKDSDE. Acidic residues predominate over residues 255–268; sequence VEDEDDEADKDSDE. An RING-type zinc finger spans residues 277–315; that stretch reads CFICREPFVDPVVTKCKHYFCEHCALKHHTKNKKCFVCN.

The protein is Zinc finger CCCH domain-containing protein 1 of Arabidopsis thaliana (Mouse-ear cress).